Reading from the N-terminus, the 190-residue chain is Somatotropin (190 aa).

His19 is a binding site for Zn(2+). A disulfide bridge connects residues Cys52 and Cys163. Glu172 contacts Zn(2+). A disulfide bridge links Cys180 with Cys188.

It belongs to the somatotropin/prolactin family.

Its subcellular location is the secreted. In terms of biological role, growth hormone plays an important role in growth control and involved in the regulation of several anabolic processes. The polypeptide is Somatotropin (GH) (Crocodylus novaeguineae (Crocodile)).